Here is a 500-residue protein sequence, read N- to C-terminus: Na(+)/H(+) antiporter NhaB (500 aa).

12 consecutive transmembrane segments (helical) span residues 34-54 (PLFFAVSPAAAGWCLVIEFIF), 62-82 (CYPLMPGGLLLVQALVLGMTT), 90-110 (LVHNFPVILLLMFMVAGIYFM), 129-149 (ALLGLLFCFLSAFLSAFLDAL), 150-170 (TVTAVIISAAVGFYSVYHRVA), 205-225 (LLMHGAVGTALGGVCTLVGEP), 241-261 (FFSKVAPVSMPVLAAGLVTCV), 311-331 (ILIVALALHVAEVGLIGLLVI), 350-370 (FKDAMPFTALLVVFFAVVAVI), 394-414 (MLFIANGLLSAISDNVFVATI), 449-469 (VATPNGQAAFLFLLTSAIAPL), and 477-497 (MVWMALPYTVVMGLLGWYAVS).

Belongs to the NhaB Na(+)/H(+) (TC 2.A.34) antiporter family.

The protein resides in the cell inner membrane. It catalyses the reaction 2 Na(+)(in) + 3 H(+)(out) = 2 Na(+)(out) + 3 H(+)(in). Na(+)/H(+) antiporter that extrudes sodium in exchange for external protons. This chain is Na(+)/H(+) antiporter NhaB, found in Pseudomonas fluorescens (strain ATCC BAA-477 / NRRL B-23932 / Pf-5).